Consider the following 150-residue polypeptide: D-aminoacyl-tRNA deacylase (150 aa).

The Gly-cisPro motif, important for rejection of L-amino acids signature appears at 140-141 (GP).

This sequence belongs to the DTD family. Homodimer.

It localises to the cytoplasm. It catalyses the reaction glycyl-tRNA(Ala) + H2O = tRNA(Ala) + glycine + H(+). The enzyme catalyses a D-aminoacyl-tRNA + H2O = a tRNA + a D-alpha-amino acid + H(+). An aminoacyl-tRNA editing enzyme that deacylates mischarged D-aminoacyl-tRNAs. Also deacylates mischarged glycyl-tRNA(Ala), protecting cells against glycine mischarging by AlaRS. Acts via tRNA-based rather than protein-based catalysis; rejects L-amino acids rather than detecting D-amino acids in the active site. By recycling D-aminoacyl-tRNA to D-amino acids and free tRNA molecules, this enzyme counteracts the toxicity associated with the formation of D-aminoacyl-tRNA entities in vivo and helps enforce protein L-homochirality. This chain is D-aminoacyl-tRNA deacylase (DTD1), found in Kluyveromyces lactis (strain ATCC 8585 / CBS 2359 / DSM 70799 / NBRC 1267 / NRRL Y-1140 / WM37) (Yeast).